Consider the following 636-residue polypeptide: DNA-directed RNA polymerase III subunit RPC3 (636 aa).

The interval 366-385 is disordered; sequence SMQRRSQERSTHQGQSHKRL. Positions 563–584 are leucine-zipper; sequence LAWNIANSIHKTEILKEENFTL.

Belongs to the RNA polymerase beta chain family. As to quaternary structure, component of the RNA polymerase III (Pol III) complex consisting of 17 subunits.

The protein localises to the nucleus. Its function is as follows. DNA-dependent RNA polymerase catalyzes the transcription of DNA into RNA using the four ribonucleoside triphosphates as substrates. Specific core component of RNA polymerase III which synthesizes small RNAs, such as 5S rRNA and tRNAs. This Eremothecium gossypii (strain ATCC 10895 / CBS 109.51 / FGSC 9923 / NRRL Y-1056) (Yeast) protein is DNA-directed RNA polymerase III subunit RPC3 (RPC82).